Reading from the N-terminus, the 335-residue chain is Anthranilate phosphoribosyltransferase (335 aa).

Residues Gly79, 82–83 (GD), Thr87, 89–92 (NIST), 107–115 (KHGSRSVSS), and Ser119 contribute to the 5-phospho-alpha-D-ribose 1-diphosphate site. Gly79 provides a ligand contact to anthranilate. Ser91 is a binding site for Mg(2+). Position 165 (Arg165) interacts with anthranilate. Positions 223 and 224 each coordinate Mg(2+).

Belongs to the anthranilate phosphoribosyltransferase family. In terms of assembly, homodimer. Mg(2+) serves as cofactor.

It catalyses the reaction N-(5-phospho-beta-D-ribosyl)anthranilate + diphosphate = 5-phospho-alpha-D-ribose 1-diphosphate + anthranilate. The protein operates within amino-acid biosynthesis; L-tryptophan biosynthesis; L-tryptophan from chorismate: step 2/5. In terms of biological role, catalyzes the transfer of the phosphoribosyl group of 5-phosphorylribose-1-pyrophosphate (PRPP) to anthranilate to yield N-(5'-phosphoribosyl)-anthranilate (PRA). In Helicobacter pylori (strain Shi470), this protein is Anthranilate phosphoribosyltransferase.